An 84-amino-acid chain; its full sequence is Small ribosomal subunit protein bS18 (84 aa).

This sequence belongs to the bacterial ribosomal protein bS18 family. As to quaternary structure, part of the 30S ribosomal subunit. Forms a tight heterodimer with protein bS6.

Its function is as follows. Binds as a heterodimer with protein bS6 to the central domain of the 16S rRNA, where it helps stabilize the platform of the 30S subunit. This chain is Small ribosomal subunit protein bS18, found in Vesicomyosocius okutanii subsp. Calyptogena okutanii (strain HA).